Reading from the N-terminus, the 688-residue chain is Potassium-transporting ATPase ATP-binding subunit (688 aa).

4 helical membrane passes run Val-35 to Ala-55, Ala-62 to Ala-82, Ile-219 to Leu-239, and Val-260 to Ile-280. Asp-313 acts as the 4-aspartylphosphate intermediate in catalysis. Residues Asp-350, Glu-354, Phe-383 to Ser-390, and Lys-401 contribute to the ATP site. 2 residues coordinate Mg(2+): Asp-524 and Asp-528. 3 consecutive transmembrane segments (helical) span residues Phe-594–Met-614, Ala-622–Leu-642, and Val-668–Ile-688.

The protein belongs to the cation transport ATPase (P-type) (TC 3.A.3) family. Type IA subfamily. As to quaternary structure, the system is composed of three essential subunits: KdpA, KdpB and KdpC.

Its subcellular location is the cell inner membrane. The enzyme catalyses K(+)(out) + ATP + H2O = K(+)(in) + ADP + phosphate + H(+). Part of the high-affinity ATP-driven potassium transport (or Kdp) system, which catalyzes the hydrolysis of ATP coupled with the electrogenic transport of potassium into the cytoplasm. This subunit is responsible for energy coupling to the transport system and for the release of the potassium ions to the cytoplasm. This Tolumonas auensis (strain DSM 9187 / NBRC 110442 / TA 4) protein is Potassium-transporting ATPase ATP-binding subunit.